A 153-amino-acid chain; its full sequence is uncharacterized protein (153 aa).

This is an uncharacterized protein from Alkalihalophilus pseudofirmus (strain ATCC BAA-2126 / JCM 17055 / OF4) (Bacillus pseudofirmus).